The chain runs to 157 residues: MKISLMAAVSENGVIGSGLDIPWHVQGEQLLFKAMTYNQWLLVGRKTFDSMGKLPNRKYAVVTRSKIISNDPDVVYFASVESALAYLNNATAHIFVSGGGEIYKALIDQADVIHLSVIHKHISGDVFFPPVPQGFKQTFEQSFSSNIDYTYQIWAKG.

The DHFR domain maps to 2-156 (KISLMAAVSE…IDYTYQIWAK (155 aa)).

Belongs to the dihydrofolate reductase family. In terms of assembly, homodimer.

The enzyme catalyses (6S)-5,6,7,8-tetrahydrofolate + NADP(+) = 7,8-dihydrofolate + NADPH + H(+). It functions in the pathway cofactor biosynthesis; tetrahydrofolate biosynthesis; 5,6,7,8-tetrahydrofolate from 7,8-dihydrofolate: step 1/1. Functionally, key enzyme in folate metabolism. Catalyzes an essential reaction for de novo glycine and purine synthesis, and for DNA precursor synthesis. This chain is Dihydrofolate reductase type 6 (dhfrVI), found in Proteus mirabilis.